A 434-amino-acid chain; its full sequence is 4-hydroxy-3-methylbut-2-en-1-yl diphosphate synthase (flavodoxin) (434 aa).

A compositionally biased stretch (polar residues) spans 1–15 (MQSEAQSPRSSQICS). Residues 1–24 (MQSEAQSPRSSQICSTEPVFGGHQ) are disordered. Residues Cys322, Cys325, Cys368, and Glu375 each contribute to the [4Fe-4S] cluster site.

This sequence belongs to the IspG family. [4Fe-4S] cluster serves as cofactor.

The enzyme catalyses (2E)-4-hydroxy-3-methylbut-2-enyl diphosphate + oxidized [flavodoxin] + H2O + 2 H(+) = 2-C-methyl-D-erythritol 2,4-cyclic diphosphate + reduced [flavodoxin]. The protein operates within isoprenoid biosynthesis; isopentenyl diphosphate biosynthesis via DXP pathway; isopentenyl diphosphate from 1-deoxy-D-xylulose 5-phosphate: step 5/6. Converts 2C-methyl-D-erythritol 2,4-cyclodiphosphate (ME-2,4cPP) into 1-hydroxy-2-methyl-2-(E)-butenyl 4-diphosphate. The chain is 4-hydroxy-3-methylbut-2-en-1-yl diphosphate synthase (flavodoxin) from Burkholderia cenocepacia (strain ATCC BAA-245 / DSM 16553 / LMG 16656 / NCTC 13227 / J2315 / CF5610) (Burkholderia cepacia (strain J2315)).